A 250-amino-acid polypeptide reads, in one-letter code: Anamorsin homolog 1 (250 aa).

Residues 1 to 104 (MNLKITINQQ…KKLNIPQQEF (104 aa)) are N-terminal SAM-like domain. The segment at 104–149 (FNNCYGKYDYIEQKFQNQINFFKQVDINGKQEIIDENELLDDGVQV) is linker. Cys155, Cys162, Cys165, and Cys167 together coordinate [2Fe-2S] cluster. The interval 155 to 167 (CASKPRACANCTC) is fe-S binding site A. Cys193, Cys196, Cys204, and Cys207 together coordinate [4Fe-4S] cluster. 2 consecutive short sequence motifs (cx2C motif) follow at residues 193–196 (CGSC) and 204–207 (CANC). The tract at residues 193-207 (CGSCYLGDAFRCANC) is fe-S binding site B.

The protein belongs to the anamorsin family. Monomer. [2Fe-2S] cluster is required as a cofactor. Requires [4Fe-4S] cluster as cofactor.

The protein localises to the cytoplasm. It is found in the mitochondrion intermembrane space. In terms of biological role, component of the cytosolic iron-sulfur (Fe-S) protein assembly (CIA) machinery. Required for the maturation of extramitochondrial Fe-S proteins. Part of an electron transfer chain functioning in an early step of cytosolic Fe-S biogenesis, facilitating the de novo assembly of a [4Fe-4S] cluster on the cytosolic Fe-S scaffold complex. Electrons are transferred from NADPH via a FAD- and FMN-containing diflavin oxidoreductase. Together with the diflavin oxidoreductase, also required for the assembly of the diferric tyrosyl radical cofactor of ribonucleotide reductase (RNR), probably by providing electrons for reduction during radical cofactor maturation in the catalytic small subunit. This chain is Anamorsin homolog 1, found in Paramecium tetraurelia.